Reading from the N-terminus, the 901-residue chain is HTH-type transcriptional regulator MalT (901 aa).

39–46 (SPAGYGKT) lines the ATP pocket. Positions 829-894 (ELIRTSPLTQ…DAVQHAQQLL (66 aa)) constitute an HTH luxR-type domain. The H-T-H motif DNA-binding region spans 853–872 (NEQIAGELAVAATTIKTHIR).

It belongs to the MalT family. In terms of assembly, monomer in solution. Oligomerizes to an active state in the presence of the positive effectors ATP and maltotriose.

Activated by ATP and maltotriose, which are both required for DNA binding. In terms of biological role, positively regulates the transcription of the maltose regulon whose gene products are responsible for uptake and catabolism of malto-oligosaccharides. Specifically binds to the promoter region of its target genes, recognizing a short DNA motif called the MalT box. In Salmonella typhimurium (strain LT2 / SGSC1412 / ATCC 700720), this protein is HTH-type transcriptional regulator MalT.